A 215-amino-acid chain; its full sequence is Ankyrin repeat domain-containing protein 49 (215 aa).

ANK repeat units follow at residues 81 to 110 (DGYT…NPNA) and 114 to 143 (LGWT…DVNA).

In terms of assembly, interacts with Bdbt; interaction promotes the stability of both complex members.

The protein resides in the cytoplasm. It is found in the cytosol. It localises to the cell membrane. Required for regulating the establishment of planar cell polarity in the wing. Forms a complex with Bdbt which likely functions in the regulation of planar polarity by promoting the activity of Dco during planar polarity establishment. Within the complex, probably functions to stabilize Bdbt, while Bdbt directly promotes Dco activity in regulating phosphorylation of core proteins such as dsh, and asymmetric localization. The chain is Ankyrin repeat domain-containing protein 49 from Drosophila melanogaster (Fruit fly).